We begin with the raw amino-acid sequence, 405 residues long: Tryptophan synthase beta chain (405 aa).

Lysine 95 is subject to N6-(pyridoxal phosphate)lysine.

Belongs to the TrpB family. Tetramer of two alpha and two beta chains. The cofactor is pyridoxal 5'-phosphate.

It carries out the reaction (1S,2R)-1-C-(indol-3-yl)glycerol 3-phosphate + L-serine = D-glyceraldehyde 3-phosphate + L-tryptophan + H2O. It participates in amino-acid biosynthesis; L-tryptophan biosynthesis; L-tryptophan from chorismate: step 5/5. In terms of biological role, the beta subunit is responsible for the synthesis of L-tryptophan from indole and L-serine. This is Tryptophan synthase beta chain from Pseudomonas putida (strain GB-1).